A 1036-amino-acid chain; its full sequence is Mitogen-activated protein kinase kinase kinase 21 (1036 aa).

Residues 1–36 (MALRGAAGATDTPVSSAGGAPGGSASSSSTSSGGSA) form a disordered region. Residues 15–36 (SSAGGAPGGSASSSSTSSGGSA) show a composition bias toward low complexity. The 65-residue stretch at 38 to 102 (AGAGLWAALY…PANYVAPCRP (65 aa)) folds into the SH3 domain. The 278-residue stretch at 124–401 (LELKELIGAG…ALILEQLTAI (278 aa)) folds into the Protein kinase domain. Residues 130–138 (IGAGGFGQV) and lysine 151 each bind ATP. Catalysis depends on aspartate 263, which acts as the Proton acceptor. Position 299 is a phosphothreonine; by autocatalysis (threonine 299). At serine 303 the chain carries Phosphoserine; by autocatalysis and MAP4K1. Leucine-zipper stretches follow at residues 425-446 (IQQM…EEEL) and 460-481 (LKRR…ELNI). The interval 517–551 (SDFQHKITVQASPNLDKRRSLNSSSSSPPSSPTMM) is disordered. A phosphoserine mark is found at serine 528, serine 543, and serine 547. Threonine 592 carries the phosphothreonine modification. Serine 614 bears the Phosphoserine mark. Residues 748–763 (AEEPLPKEEKKKREGI) are compositionally biased toward basic and acidic residues. 2 disordered regions span residues 748–791 (AEEP…SSPP) and 923–954 (PHSH…RSRS).

Belongs to the protein kinase superfamily. STE Ser/Thr protein kinase family. MAP kinase kinase kinase subfamily. As to quaternary structure, homodimer. Interacts with TLR4. The cofactor is Mg(2+). In terms of processing, autophosphorylation on serine and threonine residues within the activation loop plays a role in enzyme activation.

It catalyses the reaction L-seryl-[protein] + ATP = O-phospho-L-seryl-[protein] + ADP + H(+). It carries out the reaction L-threonyl-[protein] + ATP = O-phospho-L-threonyl-[protein] + ADP + H(+). Homodimerization via the leucine zipper domains is required for autophosphorylation and subsequent activation. Negative regulator of TLR4 signaling. Does not activate JNK1/MAPK8 pathway, p38/MAPK14, nor ERK2/MAPK1 pathways. The chain is Mitogen-activated protein kinase kinase kinase 21 from Homo sapiens (Human).